The chain runs to 166 residues: Regulatory protein RecX (166 aa).

This sequence belongs to the RecX family.

It is found in the cytoplasm. In terms of biological role, modulates RecA activity. This is Regulatory protein RecX from Shigella boydii serotype 4 (strain Sb227).